A 289-amino-acid chain; its full sequence is Oxaloacetate decarboxylase (289 aa).

Substrate is bound at residue S47. D85 is a binding site for Mg(2+). Substrate-binding residues include R156 and H232.

It belongs to the isocitrate lyase/PEP mutase superfamily. Oxaloacetate decarboxylase family. Homotetramer; dimer of dimers. It depends on Mg(2+) as a cofactor.

The catalysed reaction is oxaloacetate + H(+) = pyruvate + CO2. In terms of biological role, catalyzes the decarboxylation of oxaloacetate into pyruvate. Seems to play a role in maintaining cellular concentrations of bicarbonate and pyruvate. The chain is Oxaloacetate decarboxylase from Rhodopseudomonas palustris (strain BisA53).